The primary structure comprises 319 residues: Quinolinate synthase (319 aa).

Positions 34 and 51 each coordinate iminosuccinate. Cys96 provides a ligand contact to [4Fe-4S] cluster. Residues 122–124 and Ser139 each bind iminosuccinate; that span reads YIN. A [4Fe-4S] cluster-binding site is contributed by Cys182. Iminosuccinate-binding positions include 208 to 210 and Thr225; that span reads HPE. Cys276 is a binding site for [4Fe-4S] cluster.

It belongs to the quinolinate synthase family. Type 2 subfamily. The cofactor is [4Fe-4S] cluster.

It localises to the cytoplasm. The enzyme catalyses iminosuccinate + dihydroxyacetone phosphate = quinolinate + phosphate + 2 H2O + H(+). It functions in the pathway cofactor biosynthesis; NAD(+) biosynthesis; quinolinate from iminoaspartate: step 1/1. In terms of biological role, catalyzes the condensation of iminoaspartate with dihydroxyacetone phosphate to form quinolinate. In Thermosynechococcus vestitus (strain NIES-2133 / IAM M-273 / BP-1), this protein is Quinolinate synthase.